The sequence spans 546 residues: Cysteine--tRNA ligase (546 aa).

Cysteine 57 serves as a coordination point for Zn(2+). The short motif at 59–69 is the 'HIGH' region element; that stretch reads ATVQSSPHIGH. Residues 211 to 236 form a disordered region; it reads PSVDATGADKYNPVDPADASPDKHDP. Residues cysteine 270, histidine 295, and glutamate 299 each coordinate Zn(2+). A 'KMSKS' region motif is present at residues 326 to 330; sequence KMSKS. Residue lysine 329 coordinates ATP.

It belongs to the class-I aminoacyl-tRNA synthetase family. Monomer. Requires Zn(2+) as cofactor.

It is found in the cytoplasm. It catalyses the reaction tRNA(Cys) + L-cysteine + ATP = L-cysteinyl-tRNA(Cys) + AMP + diphosphate. The sequence is that of Cysteine--tRNA ligase from Bifidobacterium longum (strain NCC 2705).